The sequence spans 155 residues: MSGNQMAMGSEQQQTVGSRTVSVEEVPAVLQLRATQDPPRSQEAMPTRHNVRWEENVIDNENMNKKKTKICCIFHPQNEDEEECNHHSDDDGSSSSGSSSSESENEKDLDFNERRQRRLERRHRKLEKKRSYSPNAYEIQPDYSEYRRKQQEKKD.

Over residues 1–21 the composition is skewed to polar residues; the sequence is MSGNQMAMGSEQQQTVGSRTV. Disordered regions lie at residues 1 to 56 and 79 to 155; these read MSGN…WEEN and EDEE…EKKD. At serine 2 the chain carries N-acetylserine. Serine 22 is modified (phosphoserine). Residues 51–53 carry the GLC7-binding motif; it reads VRW. Positions 93-102 are enriched in low complexity; that stretch reads SSSSGSSSSE. Over residues 104-114 the composition is skewed to basic and acidic residues; that stretch reads ENEKDLDFNER. Residues 115 to 128 are compositionally biased toward basic residues; the sequence is RQRRLERRHRKLEK. Residue serine 133 is modified to Phosphoserine. The segment covering 144–155 has biased composition (basic and acidic residues); that stretch reads SEYRRKQQEKKD.

Belongs to the YPI1 family. In terms of assembly, interacts with GLC7, PPZ1 and SDS22.

It is found in the nucleus. Its function is as follows. Regulator of type 1 phosphatases which maintains protein phosphatase activity under strict control. Regulates the nuclear localization of type 1 phosphatase GLC7 and SDS22, and is involved in the regulation of mRNA 3'-end processing. May also regulate the activity of type 1 phosphatase PPZ1. This chain is Type 1 phosphatases regulator YPI1 (YPI1), found in Saccharomyces cerevisiae (strain YJM789) (Baker's yeast).